The sequence spans 365 residues: Isopentenyl-diphosphate delta-isomerase (365 aa).

8–9 is a substrate binding site; that stretch reads RK. Residues 67–69, Ser97, and Asn126 contribute to the FMN site; that span reads SIT. Residue 97-99 coordinates substrate; it reads SQR. Gln160 contacts substrate. Mg(2+) is bound at residue Glu161. FMN-binding positions include Lys192, Thr222, 272 to 274, and 293 to 294; these read GIR and AL.

It belongs to the IPP isomerase type 2 family. In terms of assembly, homooctamer. Dimer of tetramers. FMN serves as cofactor. NADPH is required as a cofactor. It depends on Mg(2+) as a cofactor.

The protein resides in the cytoplasm. The enzyme catalyses isopentenyl diphosphate = dimethylallyl diphosphate. Involved in the biosynthesis of isoprenoids. Catalyzes the 1,3-allylic rearrangement of the homoallylic substrate isopentenyl (IPP) to its allylic isomer, dimethylallyl diphosphate (DMAPP). This chain is Isopentenyl-diphosphate delta-isomerase, found in Methanosarcina barkeri (strain Fusaro / DSM 804).